The primary structure comprises 318 residues: Curved DNA-binding protein (318 aa).

The J domain occupies 5–69 (DYYKILGVEP…QKRAEFDEIR (65 aa)). Residues 111-130 (GGGNPFGGARQQQRSAGRRG) form a disordered region.

The protein resides in the cytoplasm. It localises to the nucleoid. Its function is as follows. DNA-binding protein that preferentially recognizes a curved DNA sequence. It is probably a functional analog of DnaJ; displays overlapping activities with DnaJ, but functions under different conditions, probably acting as a molecular chaperone in an adaptive response to environmental stresses other than heat shock. Lacks autonomous chaperone activity; binds native substrates and targets them for recognition by DnaK. Its activity is inhibited by the binding of CbpM. This Pseudomonas putida (strain GB-1) protein is Curved DNA-binding protein.